A 211-amino-acid chain; its full sequence is Molybdenum cofactor guanylyltransferase (211 aa).

Residues 12-14 (LAG), Lys-25, Asn-55, Asp-73, and Asp-103 contribute to the GTP site. Asp-103 is a binding site for Mg(2+).

The protein belongs to the MobA family. In terms of assembly, monomer. The cofactor is Mg(2+).

It is found in the cytoplasm. It carries out the reaction Mo-molybdopterin + GTP + H(+) = Mo-molybdopterin guanine dinucleotide + diphosphate. Functionally, transfers a GMP moiety from GTP to Mo-molybdopterin (Mo-MPT) cofactor (Moco or molybdenum cofactor) to form Mo-molybdopterin guanine dinucleotide (Mo-MGD) cofactor. This chain is Molybdenum cofactor guanylyltransferase, found in Albidiferax ferrireducens (strain ATCC BAA-621 / DSM 15236 / T118) (Rhodoferax ferrireducens).